The primary structure comprises 439 residues: tRNA-2-methylthio-N(6)-dimethylallyladenosine synthase (439 aa).

Residues 2 to 116 (LKVYIETMGC…ISQVIHKEKA (115 aa)) enclose the MTTase N-terminal domain. [4Fe-4S] cluster-binding residues include cysteine 11, cysteine 47, cysteine 79, cysteine 149, cysteine 153, and cysteine 156. Residues 135-368 (KKAEVRSLLN…QNRHKEILEE (234 aa)) form the Radical SAM core domain. Positions 371-437 (RLEVGKTHVV…KGRLMATTKN (67 aa)) constitute a TRAM domain.

It belongs to the methylthiotransferase family. MiaB subfamily. In terms of assembly, monomer. It depends on [4Fe-4S] cluster as a cofactor.

The protein localises to the cytoplasm. It carries out the reaction N(6)-dimethylallyladenosine(37) in tRNA + (sulfur carrier)-SH + AH2 + 2 S-adenosyl-L-methionine = 2-methylsulfanyl-N(6)-dimethylallyladenosine(37) in tRNA + (sulfur carrier)-H + 5'-deoxyadenosine + L-methionine + A + S-adenosyl-L-homocysteine + 2 H(+). In terms of biological role, catalyzes the methylthiolation of N6-(dimethylallyl)adenosine (i(6)A), leading to the formation of 2-methylthio-N6-(dimethylallyl)adenosine (ms(2)i(6)A) at position 37 in tRNAs that read codons beginning with uridine. The polypeptide is tRNA-2-methylthio-N(6)-dimethylallyladenosine synthase (Helicobacter acinonychis (strain Sheeba)).